The chain runs to 201 residues: Recombination protein RecR (201 aa).

The segment at Cys59–Cys74 adopts a C4-type zinc-finger fold. The Toprim domain maps to Ser82–Pro177.

It belongs to the RecR family.

Its function is as follows. May play a role in DNA repair. It seems to be involved in an RecBC-independent recombinational process of DNA repair. It may act with RecF and RecO. The protein is Recombination protein RecR of Rickettsia conorii (strain ATCC VR-613 / Malish 7).